The sequence spans 372 residues: BTB/POZ and TAZ domain-containing protein 4 (372 aa).

The segment at 14-37 (SADSSSVPIPPPLPSKSDGLKKKL) is disordered. Residues 60 to 128 (ADVVIYTDNG…LYSSCYEKEE (69 aa)) form the BTB domain. Residues 238-330 (RIYSQLYEAM…SDQCRVPLCR (93 aa)) form a TAZ-type zinc finger. The interval 341 to 364 (KKDESRWKLLVKNVLGSKKIGGSP) is caM-binding.

As to quaternary structure, interacts with GTE11/BET10 through the BTB domain. As to expression, preferentially expressed in leaves, stems and flowers.

It localises to the cytoplasm. Its pathway is protein modification; protein ubiquitination. May act as a substrate-specific adapter of an E3 ubiquitin-protein ligase complex (CUL3-RBX1-BTB) which mediates the ubiquitination and subsequent proteasomal degradation of target proteins. The polypeptide is BTB/POZ and TAZ domain-containing protein 4 (BT4) (Arabidopsis thaliana (Mouse-ear cress)).